The following is a 364-amino-acid chain: tRNA 2-selenouridine synthase (364 aa).

Positions 14–137 (LIADTPIIDV…LRQTTIQATI (124 aa)) constitute a Rhodanese domain. Cysteine 97 acts as the S-selanylcysteine intermediate in catalysis.

This sequence belongs to the SelU family. In terms of assembly, monomer.

The catalysed reaction is 5-methylaminomethyl-2-thiouridine(34) in tRNA + selenophosphate + (2E)-geranyl diphosphate + H2O + H(+) = 5-methylaminomethyl-2-selenouridine(34) in tRNA + (2E)-thiogeraniol + phosphate + diphosphate. The enzyme catalyses 5-methylaminomethyl-2-thiouridine(34) in tRNA + (2E)-geranyl diphosphate = 5-methylaminomethyl-S-(2E)-geranyl-thiouridine(34) in tRNA + diphosphate. It carries out the reaction 5-methylaminomethyl-S-(2E)-geranyl-thiouridine(34) in tRNA + selenophosphate + H(+) = 5-methylaminomethyl-2-(Se-phospho)selenouridine(34) in tRNA + (2E)-thiogeraniol. It catalyses the reaction 5-methylaminomethyl-2-(Se-phospho)selenouridine(34) in tRNA + H2O = 5-methylaminomethyl-2-selenouridine(34) in tRNA + phosphate. Involved in the post-transcriptional modification of the uridine at the wobble position (U34) of tRNA(Lys), tRNA(Glu) and tRNA(Gln). Catalyzes the conversion of 2-thiouridine (S2U-RNA) to 2-selenouridine (Se2U-RNA). Acts in a two-step process involving geranylation of 2-thiouridine (S2U) to S-geranyl-2-thiouridine (geS2U) and subsequent selenation of the latter derivative to 2-selenouridine (Se2U) in the tRNA chain. This chain is tRNA 2-selenouridine synthase, found in Escherichia coli O139:H28 (strain E24377A / ETEC).